Reading from the N-terminus, the 289-residue chain is Homoserine kinase (289 aa).

Residue 79 to 89 (PLARGLGSSSS) participates in ATP binding.

Belongs to the GHMP kinase family. Homoserine kinase subfamily.

The protein localises to the cytoplasm. The catalysed reaction is L-homoserine + ATP = O-phospho-L-homoserine + ADP + H(+). It participates in amino-acid biosynthesis; L-threonine biosynthesis; L-threonine from L-aspartate: step 4/5. Catalyzes the ATP-dependent phosphorylation of L-homoserine to L-homoserine phosphate. This is Homoserine kinase from Streptococcus pneumoniae serotype 2 (strain D39 / NCTC 7466).